Reading from the N-terminus, the 141-residue chain is Large ribosomal subunit protein uL16 (141 aa).

A compositionally biased stretch (basic residues) spans 1–17 (MLQPKRTKYRKVQKGRM). The interval 1-29 (MLQPKRTKYRKVQKGRMKGNSQRGHELSN) is disordered.

The protein belongs to the universal ribosomal protein uL16 family. Part of the 50S ribosomal subunit.

Its function is as follows. Binds 23S rRNA and is also seen to make contacts with the A and possibly P site tRNAs. This chain is Large ribosomal subunit protein uL16, found in Flavobacterium johnsoniae (strain ATCC 17061 / DSM 2064 / JCM 8514 / BCRC 14874 / CCUG 350202 / NBRC 14942 / NCIMB 11054 / UW101) (Cytophaga johnsonae).